Here is a 58-residue protein sequence, read N- to C-terminus: Small ribosomal subunit protein bS21 (58 aa).

The disordered stretch occupies residues 25–58 (KAGTLQEARKREHYEKPSVKRKRKSEAARKRKKI). Basic and acidic residues predominate over residues 31 to 42 (EARKREHYEKPS). Residues 43 to 58 (VKRKRKSEAARKRKKI) show a composition bias toward basic residues.

Belongs to the bacterial ribosomal protein bS21 family.

This Streptococcus thermophilus (strain ATCC BAA-491 / LMD-9) protein is Small ribosomal subunit protein bS21.